We begin with the raw amino-acid sequence, 64 residues long: Prokaryotic ubiquitin-like protein UBact (64 aa).

The interval 1 to 64 (MFNGEEVILF…SERYRQRTGE (64 aa)) is disordered. Over residues 22–64 (REIHKDAPAPKRPETKKTGDRLMDRMKKVDPNQSERYRQRTGE) the composition is skewed to basic and acidic residues. Glutamate 64 is covalently cross-linked (Isoglutamyl lysine isopeptide (Glu-Lys) (interchain with K-? in acceptor proteins)).

The protein belongs to the ubiquitin-like protein UBact family.

May function as a protein modifier covalently attached to lysine residues of substrate proteins. This may serve to target the modified proteins for degradation by proteasomes. The polypeptide is Prokaryotic ubiquitin-like protein UBact (Leptospirillum ferriphilum (strain ML-04)).